Reading from the N-terminus, the 256-residue chain is uncharacterized protein (256 aa).

Positions 18, 37, 46, 66, 164, 168, 197, and 199 each coordinate NADP(+). Y164 functions as the Proton donor in the catalytic mechanism. K168 serves as the catalytic Lowers pKa of active site Tyr.

The protein belongs to the short-chain dehydrogenases/reductases (SDR) family.

The protein resides in the cytoplasm. This is an uncharacterized protein from Saccharomyces cerevisiae (strain ATCC 204508 / S288c) (Baker's yeast).